The primary structure comprises 245 residues: E3 ubiquitin-protein ligase RNF138 (245 aa).

A2 bears the N-acetylalanine mark. An RING-type zinc finger spans residues 18–58; it reads CPVCQEVLKTPVRTTACQHVFCRKCFLTAMRESGAHCPLCR. Positions 86, 89, 101, and 105 each coordinate Zn(2+). The segment at 86 to 105 adopts a C2HC RNF-type zinc-finger fold; that stretch reads CRCCAKQIKFYRMRHHYKSC. Residues 125–154 are disordered; the sequence is QDSVGNSNRSETSTSDNTETYQENTSSSGH. T142 carries the phosphothreonine modification. 2 consecutive C2H2-type zinc fingers follow at residues 157–180 and 187–215; these read FKCPLCQESNFTRQRLLDHCNSNH and VTCPICVSLPWGDPSQITRNFVSHLNQRH. Residues 225 to 243 form the UIM domain; it reads LQLDEETQYQTAVEESFQV.

Interacts with NLK. Interacts with XRCC5/Ku80. Interacts with RBBP8/CtIP. Post-translationally, auto-ubiquitinated.

Its subcellular location is the chromosome. It carries out the reaction S-ubiquitinyl-[E2 ubiquitin-conjugating enzyme]-L-cysteine + [acceptor protein]-L-lysine = [E2 ubiquitin-conjugating enzyme]-L-cysteine + N(6)-ubiquitinyl-[acceptor protein]-L-lysine.. It functions in the pathway protein modification; protein ubiquitination. Its function is as follows. E3 ubiquitin-protein ligase involved in DNA damage response by promoting DNA resection and homologous recombination. Recruited to sites of double-strand breaks following DNA damage and specifically promotes double-strand break repair via homologous recombination. Two different, non-exclusive, mechanisms have been proposed. According to a report, regulates the choice of double-strand break repair by favoring homologous recombination over non-homologous end joining (NHEJ): acts by mediating ubiquitination of XRCC5/Ku80, leading to remove the Ku complex from DNA breaks, thereby promoting homologous recombination. According to another report, cooperates with UBE2Ds E2 ubiquitin ligases (UBE2D1, UBE2D2, UBE2D3 or UBE2D4) to promote homologous recombination by mediating ubiquitination of RBBP8/CtIP. Together with NLK, involved in the ubiquitination and degradation of TCF/LEF. Also exhibits auto-ubiquitination activity in combination with UBE2K. May act as a negative regulator in the Wnt/beta-catenin-mediated signaling pathway. This is E3 ubiquitin-protein ligase RNF138 from Homo sapiens (Human).